A 141-amino-acid chain; its full sequence is Nucleoside diphosphate kinase (141 aa).

Lys11, Phe59, Arg87, Thr93, Arg104, and Asn114 together coordinate ATP. The active-site Pros-phosphohistidine intermediate is the His117.

Belongs to the NDK family. As to quaternary structure, homotetramer. Requires Mg(2+) as cofactor.

The protein localises to the cytoplasm. The enzyme catalyses a 2'-deoxyribonucleoside 5'-diphosphate + ATP = a 2'-deoxyribonucleoside 5'-triphosphate + ADP. It catalyses the reaction a ribonucleoside 5'-diphosphate + ATP = a ribonucleoside 5'-triphosphate + ADP. Functionally, major role in the synthesis of nucleoside triphosphates other than ATP. The ATP gamma phosphate is transferred to the NDP beta phosphate via a ping-pong mechanism, using a phosphorylated active-site intermediate. The sequence is that of Nucleoside diphosphate kinase from Acidovorax ebreus (strain TPSY) (Diaphorobacter sp. (strain TPSY)).